Reading from the N-terminus, the 70-residue chain is Beta-defensin 107A (70 aa).

Residues Met1–Thr26 form the signal peptide. Intrachain disulfides connect Cys41–Cys55 and Cys45–Cys64.

This sequence belongs to the beta-defensin family.

It localises to the secreted. Has antibacterial activity. In Pan troglodytes (Chimpanzee), this protein is Beta-defensin 107A (DEFB107A).